A 783-amino-acid chain; its full sequence is FYN-binding protein 1 (783 aa).

Polar residues-rich tracts occupy residues 1 to 18 (MAKYNTGGNPTEDVSVNS) and 25 to 45 (GPNSSSGIQARKNLFNNQGNA). A disordered region spans residues 1–502 (MAKYNTGGNP…KEKKEQEIKK (502 aa)). An N6-acetyllysine modification is found at K3. A phosphoserine mark is found at S28 and S46. Residues 69-79 (SSEEKPDKEPK) show a composition bias toward basic and acidic residues. S225 is subject to Phosphoserine. Composition is skewed to basic and acidic residues over residues 240-252 (PAREDSENKDHAG) and 278-290 (NGEEKKEDRKIDA). S329 carries the post-translational modification Phosphoserine. Over residues 345 to 363 (KPLPPLFTLGPPPPKPNRP) the composition is skewed to pro residues. Residues 348–448 (PPLFTLGPPP…QDGVTHSDGA (101 aa)) are interaction with SKAP1. The span at 374–387 (TSSGNSTSKGQTSY) shows a compositional bias: polar residues. Pro residues predominate over residues 392–424 (LPPPPPSHPASQPPLPASHPSQPPVPSLPPRNI). Over residues 451-465 (LDEEQDSEGETYEDI) the composition is skewed to acidic residues. The stretch at 456-507 (DSEGETYEDIEASKEREKKREKEEKKRLELEKKEQKEKEKKEQEIKKKFKLT) forms a coiled coil. S457 is subject to Phosphoserine. Positions 462–465 (YEDI) match the SH2-binding motif. Positions 466 to 501 (EASKEREKKREKEEKKRLELEKKEQKEKEKKEQEIK) are enriched in basic and acidic residues. The Nuclear localization signal motif lies at 469-505 (KEREKKREKEEKKRLELEKKEQKEKEKKEQEIKKKFK). The 62-residue stretch at 511–572 (QVIHLAKACC…KTTAVEIDYD (62 aa)) folds into the SH3 1 domain. Position 571 is a phosphotyrosine (Y571). Phosphoserine occurs at positions 573 and 580. An SH2-binding; to LCP2 motif is present at residues 595 to 598 (YDDV). Residues 598–678 (VAEQDDISSH…GTNVGKAKTE (81 aa)) are disordered. 2 stretches are compositionally biased toward acidic residues: residues 620 to 635 (PDDDIYDGIEEEDADD) and 646 to 656 (MGDEVYDDVDT). An SH2-binding; to FYN motif is present at residues 625-628 (YDGI). At Y651 the chain carries Phosphotyrosine. The Nuclear localization signal motif lies at 674 to 700 (KAKTEEKDLKKLKKQEKEEKDFRKKFK). In terms of domain architecture, SH3 2 spans 700–768 (KYDGEIRVLY…LRSYLADNDG (69 aa)).

Part of a complex consisting of SKAP2, FYB1 and PTPNS1. Part of a complex consisting of SKAP2, FYB1 and LILRB3. Part of a complex consisting of SKAP1, FYB1 and CLNK. Interacts with CLNK (via its SH2 domain); this interaction allows SKAP1 and FYB1 to recruit FYN to the complex, thus promoting the phosphorylation of CLNK by FYN. Interacts with FYN. Interacts with LCP2. Interacts with SKAP1. Interacts with SKAP2. Interacts with FASLG. Interacts with EVL. Interacts with TMEM47. Interacts with LCK. Post-translationally, T-cell receptor ligation leads to increased tyrosine phosphorylation. As to expression, expressed in hematopoietic tissues such as myeloid and T-cells, spleen and thymus. Not expressed in B-cells, nor in non-lymphoid tissues.

Its subcellular location is the cytoplasm. The protein localises to the nucleus. It is found in the cell junction. Its function is as follows. Acts as an adapter protein of the FYN and LCP2 signaling cascades in T-cells. May play a role in linking T-cell signaling to remodeling of the actin cytoskeleton. Modulates the expression of IL2. Involved in platelet activation. Prevents the degradation of SKAP1 and SKAP2. May be involved in high affinity immunoglobulin epsilon receptor signaling in mast cells. This is FYN-binding protein 1 from Homo sapiens (Human).